The following is a 199-amino-acid chain: Elongation factor Ts (199 aa).

The tract at residues T80–V83 is involved in Mg(2+) ion dislocation from EF-Tu.

Belongs to the EF-Ts family.

The protein localises to the cytoplasm. Associates with the EF-Tu.GDP complex and induces the exchange of GDP to GTP. It remains bound to the aminoacyl-tRNA.EF-Tu.GTP complex up to the GTP hydrolysis stage on the ribosome. The sequence is that of Elongation factor Ts from Thermodesulfovibrio yellowstonii (strain ATCC 51303 / DSM 11347 / YP87).